The primary structure comprises 1196 residues: [NU+] prion formation protein 1 (1196 aa).

Disordered regions lie at residues 1 to 49 and 103 to 125; these read MPPK…KSSY and TYKQ…STTS. Composition is skewed to polar residues over residues 39 to 49 and 103 to 113; these read GSNNASKKSSY and TYKQSAVTPNQ. The span at 114–125 shows a compositional bias: low complexity; sequence SGTPTPSASTTS. Serine 443 is modified (phosphoserine). 2 ABC transporter domains span residues 570–786 and 812–1129; these read IEIV…YYTL and AKMT…ADAV. Residues 604 to 611 and 846 to 853 each bind ATP; these read GRNGAGKS and GPNGAGKS. In terms of domain architecture, Chromo spans 942–1003; it reads RAIEAIVGRQ…HEASREGLGY (62 aa). 2 disordered regions span residues 1137-1166 and 1177-1196; these read AKPS…EKKL and EWLS…DEED. At threonine 1191 the chain carries Phosphothreonine.

This sequence belongs to the ABC transporter superfamily. ABCF family. EF3 subfamily.

The protein resides in the cytoplasm. It is found in the nucleus. Functionally, may be involved in the mRNA export process. Forms the [NU+] prion and induces [PSI+] prion formation. This Saccharomyces cerevisiae (strain ATCC 204508 / S288c) (Baker's yeast) protein is [NU+] prion formation protein 1 (NEW1).